Reading from the N-terminus, the 303-residue chain is MYYGFDIGGTKIALGVFDSGRQLQWEKRVPTPRDSYDAFLDAVCELVAEADQRFGCKGSVGIGIPGMPETEDGTLYAANVPAASGKPLRADLSARLDRDVRLDNDANCFALSEAWDDEFTQYPLVMGLILGTGVGGGLIFNGKPITGKSYITGEFGHMRLPVDALTMMGLDFPLRRCGCGQHGCIENYLSGRGFAWLYQHYYHQPLQAPEIIALYDQGDEQARAHVERYLDLLAVCLGNILTIVDPDLVVIGGGLSNFPAITAQLADRLPRHLLPVARVPRIERARHGDAGGMRGAAFLHLTD.

ATP is bound by residues 4 to 11 and 133 to 140; these read GFDIGGTK and GVGGGLIF. 4 residues coordinate Zn(2+): histidine 157, cysteine 177, cysteine 179, and cysteine 184.

It belongs to the ROK (NagC/XylR) family. NagK subfamily.

The enzyme catalyses N-acetyl-D-glucosamine + ATP = N-acetyl-D-glucosamine 6-phosphate + ADP + H(+). Its pathway is cell wall biogenesis; peptidoglycan recycling. Catalyzes the phosphorylation of N-acetyl-D-glucosamine (GlcNAc) derived from cell-wall degradation, yielding GlcNAc-6-P. The sequence is that of N-acetyl-D-glucosamine kinase from Escherichia coli O9:H4 (strain HS).